A 421-amino-acid chain; its full sequence is Large ribosomal subunit protein uL4 (421 aa).

Ala-2 carries the N-acetylalanine modification. Lys-14 carries the N6-acetyllysine modification. An Omega-N-methylarginine modification is found at Arg-97. Lys-106 carries the N6-acetyllysine modification. Residue Lys-239 forms a Glycyl lysine isopeptide (Lys-Gly) (interchain with G-Cter in SUMO2) linkage. N6-acetyllysine is present on Lys-259. Thr-266 carries the post-translational modification Phosphothreonine. Ser-290 carries the phosphoserine modification. A Citrulline modification is found at Arg-300. A Glycyl lysine isopeptide (Lys-Gly) (interchain with G-Cter in SUMO2) cross-link involves residue Lys-327. Lys-333 and Lys-353 each carry N6-acetyllysine. Residues 359–421 are disordered; the sequence is EAKSEEKGVP…PTTEEKKPAA (63 aa). Lys-361 bears the N6-acetyllysine; alternate mark. Lys-361 participates in a covalent cross-link: Glycyl lysine isopeptide (Lys-Gly) (interchain with G-Cter in SUMO1); alternate. Ser-362 carries the phosphoserine modification. Residues 368-391 show a composition bias toward basic residues; it reads PGKKPRRKKGKKTVGVKKPKKPVV. Basic and acidic residues predominate over residues 401-421; the sequence is PAADKKPAEKKPTTEEKKPAA.

It belongs to the universal ribosomal protein uL4 family. Component of the large ribosomal subunit. May bind IPO9 with low affinity. Interacts with RBM3. Citrullinated by PADI4.

Its subcellular location is the cytoplasm. Component of the large ribosomal subunit. The ribosome is a large ribonucleoprotein complex responsible for the synthesis of proteins in the cell. The protein is Large ribosomal subunit protein uL4 (RPL4) of Canis lupus familiaris (Dog).